The sequence spans 349 residues: [LysW]-L-2-aminoadipate/[LysW]-L-glutamate phosphate reductase (349 aa).

10 to 13 (SGYT) is an NADP(+) binding site. Residue Cys-150 is part of the active site. Residue Asn-316 coordinates NADP(+).

Belongs to the NAGSA dehydrogenase family. Type 1 subfamily. LysY sub-subfamily.

The protein localises to the cytoplasm. The catalysed reaction is [amino-group carrier protein]-C-terminal-N-(1-carboxy-5-oxopentan-1-yl)-L-glutamine + phosphate + NADP(+) = [amino-group carrier protein]-C-terminal-N-(1-carboxy-5-phosphooxy-5-oxopentan-1-yl)-L-glutamine + NADPH + H(+). It carries out the reaction [amino-group carrier protein]-C-terminal-gamma-(L-glutamyl-5-semialdehyde)-L-glutamate + phosphate + NADP(+) = [amino-group carrier protein]-C-terminal-gamma-(5-phospho-L-glutamyl)-L-glutamate + NADPH + H(+). It functions in the pathway amino-acid biosynthesis; L-lysine biosynthesis via AAA pathway; L-lysine from L-alpha-aminoadipate (Thermus route): step 3/5. Its pathway is amino-acid biosynthesis; L-arginine biosynthesis. Its function is as follows. Involved in both the arginine and lysine biosynthetic pathways. This chain is [LysW]-L-2-aminoadipate/[LysW]-L-glutamate phosphate reductase, found in Sulfurisphaera tokodaii (strain DSM 16993 / JCM 10545 / NBRC 100140 / 7) (Sulfolobus tokodaii).